The primary structure comprises 148 residues: Cytochrome c-552 (148 aa).

A signal peptide spans 1 to 17 (MKRTLMAFLLLGGLALA). Q18 is subject to Pyrrolidone carboxylic acid. Residues C28, C31, H32, and M86 each coordinate heme c.

Binds 1 heme c group covalently per subunit.

This monoheme basic protein appears to function as an electron donor to cytochrome oxidase in T.thermophilus. This chain is Cytochrome c-552 (cycA), found in Thermus thermophilus (strain ATCC 27634 / DSM 579 / HB8).